The following is a 1191-amino-acid chain: Pyruvate-flavodoxin oxidoreductase (1191 aa).

4Fe-4S ferredoxin-type domains lie at 687–716 (QVCS…VKAV) and 744–773 (YVLA…TGAR). Positions 696, 699, 702, 706, 753, 756, 759, 763, 825, 828, 853, and 1085 each coordinate [4Fe-4S] cluster.

Belongs to the pyruvate:ferredoxin/flavodoxin oxidoreductase family. It depends on [4Fe-4S] cluster as a cofactor.

It catalyses the reaction oxidized [flavodoxin] + pyruvate + CoA + 2 H(+) = reduced [flavodoxin] + acetyl-CoA + CO2. Its function is as follows. Oxidoreductase required for the transfer of electrons from pyruvate to flavodoxin, which reduces nitrogenase. This chain is Pyruvate-flavodoxin oxidoreductase (nifJ), found in Rhodospirillum rubrum (strain ATCC 11170 / ATH 1.1.1 / DSM 467 / LMG 4362 / NCIMB 8255 / S1).